The primary structure comprises 408 residues: Beta-ureidopropionase (408 aa).

Residues 90–360 (VRVGLIQNSI…DGLLISDMDL (271 aa)) enclose the CN hydrolase domain. Catalysis depends on Glu137, which acts as the Proton acceptor. Lys212 acts as the Proton donor in catalysis. The active-site Nucleophile is the Cys249.

This sequence belongs to the carbon-nitrogen hydrolase superfamily. BUP family. In terms of assembly, homodimer, homotetramer, homooctamer; can also form higher homooligomers.

It is found in the cytoplasm. It carries out the reaction 3-(carbamoylamino)propanoate + H2O + 2 H(+) = beta-alanine + NH4(+) + CO2. The catalysed reaction is 3-(carbamoylamino)-2-methylpropanoate + H2O + 2 H(+) = (R)-3-amino-2-methylpropanoate + NH4(+) + CO2. The protein operates within amino-acid biosynthesis; beta-alanine biosynthesis. Its function is as follows. Catalyzes a late step in pyrimidine degradation. Converts N-carbamoyl-beta-aminoisobutyrate and N-carbamoyl-beta-alanine (3-ureidopropanoate) to, respectively, beta-aminoisobutyrate and beta-alanine, ammonia and carbon dioxide. Involved in the recycling of nitrogen from nucleobases to general nitrogen metabolism. This Arabidopsis thaliana (Mouse-ear cress) protein is Beta-ureidopropionase.